The following is a 323-amino-acid chain: Aldo-keto reductase family 1 member C21 (323 aa).

Position 20 to 24 (20 to 24) interacts with NADP(+); it reads GFGTA. Lysine 31 is a binding site for substrate. Aspartate 50 contributes to the NADP(+) binding site. Residue tyrosine 55 is the Proton donor of the active site. Histidine 117 is a substrate binding site. NADP(+) contacts are provided by residues 166 to 167, glutamine 190, 216 to 224, and 270 to 280; these read SN, YGVLGTQRY, and TSLKEERIKEN.

The protein belongs to the aldo/keto reductase family. Monomer. As to expression, detected in kidney and brain.

It is found in the cytoplasm. It catalyses the reaction androsterone + NADP(+) = 5alpha-androstan-3,17-dione + NADPH + H(+). It carries out the reaction androsterone + NAD(+) = 5alpha-androstan-3,17-dione + NADH + H(+). Its activity is regulated as follows. Inhibited by high concentrations of substrate. Functionally, NADP-dependent 17-alpha-hydroxysteroid dehydrogenase that converts 5-alpha-androstane-3,17-dione into androsterone. Has lower 3-alpha-hydroxysteroid dehydrogenase activity. Has broad substrate specificity and acts on various 17-alpha-hydroxysteroids, 17-ketosteroids, 3-alpha hydroxysteroids and 3-ketosteroids. Reduction of keto groups is strictly stereoselective. Reduction of 17-ketosteroids yields only 17-alpha-hydroxysteroids. Likewise, reduction of 3-ketosteroids yields only 3-alpha-hydroxysteroids. This is Aldo-keto reductase family 1 member C21 (Akr1c21) from Mus musculus (Mouse).